The primary structure comprises 384 residues: Chaperone protein DnaJ (384 aa).

The 65-residue stretch at 4-68 (DFYEILGVSR…EKRQMYDQMG (65 aa)) folds into the J domain. Disordered regions lie at residues 29 to 60 (REYH…DEEK) and 73 to 131 (EQAE…GQDL). Over residues 42 to 60 (EEKFKQAKKAKEVLTDEEK) the composition is skewed to basic and acidic residues. Over residues 80–101 (GAGGGGGRGGMGGDPFGGGAGG) the composition is skewed to gly residues. The segment covering 102–111 (FDMQDIFDQF) has biased composition (low complexity). Residues 112–121 (FGGGGRGGRG) are compositionally biased toward gly residues. Residues 145–227 (GATKQLNVTR…CRGNGVVQND (83 aa)) form a CR-type zinc finger. Cys158, Cys161, Cys175, and Cys178 together coordinate Zn(2+). CXXCXGXG motif repeat units follow at residues 158–165 (CDDCDGAG), 175–182 (CPECNGQG), 201–208 (CRRCDGEG), and 215–222 (CSTCRGNG). The tract at residues 160-191 (DCDGAGHPPGADSETCPECNGQGQTTQVQQTP) is disordered. The segment covering 180–190 (GQGQTTQVQQT) has biased composition (low complexity). Zn(2+) is bound by residues Cys201, Cys204, Cys215, and Cys218.

This sequence belongs to the DnaJ family. Homodimer. The cofactor is Zn(2+).

The protein resides in the cytoplasm. In terms of biological role, participates actively in the response to hyperosmotic and heat shock by preventing the aggregation of stress-denatured proteins and by disaggregating proteins, also in an autonomous, DnaK-independent fashion. Unfolded proteins bind initially to DnaJ; upon interaction with the DnaJ-bound protein, DnaK hydrolyzes its bound ATP, resulting in the formation of a stable complex. GrpE releases ADP from DnaK; ATP binding to DnaK triggers the release of the substrate protein, thus completing the reaction cycle. Several rounds of ATP-dependent interactions between DnaJ, DnaK and GrpE are required for fully efficient folding. Also involved, together with DnaK and GrpE, in the DNA replication of plasmids through activation of initiation proteins. The protein is Chaperone protein DnaJ of Haloarcula marismortui (strain ATCC 43049 / DSM 3752 / JCM 8966 / VKM B-1809) (Halobacterium marismortui).